We begin with the raw amino-acid sequence, 206 residues long: LexA repressor (206 aa).

Positions 28 to 48 (VREICNAVGLSSTSTVHGHLS) form a DNA-binding region, H-T-H motif. Catalysis depends on for autocatalytic cleavage activity residues S128 and K166.

The protein belongs to the peptidase S24 family. As to quaternary structure, homodimer.

It carries out the reaction Hydrolysis of Ala-|-Gly bond in repressor LexA.. Represses a number of genes involved in the response to DNA damage (SOS response), including recA and lexA. In the presence of single-stranded DNA, RecA interacts with LexA causing an autocatalytic cleavage which disrupts the DNA-binding part of LexA, leading to derepression of the SOS regulon and eventually DNA repair. The chain is LexA repressor from Ligilactobacillus salivarius (strain UCC118) (Lactobacillus salivarius).